Here is a 392-residue protein sequence, read N- to C-terminus: Potassium/proton antiporter CemA (392 aa).

4 helical membrane passes run 174–194, 269–289, 316–336, and 352–372; these read FLASLIWIPWIVSWFLRVWWL, SLANLGSDILACLILLAMLSL, FLILVTDVFVGFHSTHGWEVI, and FIFMFVATFPVLLDTVFKYWI.

Belongs to the CemA family.

Its subcellular location is the plastid. The protein localises to the chloroplast inner membrane. It carries out the reaction K(+)(in) + H(+)(out) = K(+)(out) + H(+)(in). In terms of biological role, contributes to K(+)/H(+) antiport activity by supporting proton efflux to control proton extrusion and homeostasis in chloroplasts in a light-dependent manner to modulate photosynthesis. Prevents excessive induction of non-photochemical quenching (NPQ) under continuous-light conditions. Indirectly promotes efficient inorganic carbon uptake into chloroplasts. The chain is Potassium/proton antiporter CemA from Nephroselmis olivacea (Green alga).